The primary structure comprises 353 residues: Photosystem II D2 protein (353 aa).

At Thr2 the chain carries N-acetylthreonine. Residue Thr2 is modified to Phosphothreonine. Residues 41–61 (CAYFALGGWFTGTTFVTSWYT) traverse the membrane as a helical segment. His118 provides a ligand contact to chlorophyll a. A helical transmembrane segment spans residues 125-141 (GFMLRQFELARSVQLRP). Residues Gln130 and Asn143 each contribute to the pheophytin a site. Residues 153–166 (VFVSVFFIYPLGQS) traverse the membrane as a helical segment. Position 198 (His198) interacts with chlorophyll a. A helical transmembrane segment spans residues 208 to 228 (AALLCAIHGATVENTLFEDGD). A plastoquinone is bound by residues His215 and Phe262. His215 is a binding site for Fe cation. His269 is a Fe cation binding site. A helical transmembrane segment spans residues 279–295 (GLWMSALGVVGLALNLR).

It belongs to the reaction center PufL/M/PsbA/D family. In terms of assembly, PSII is composed of 1 copy each of membrane proteins PsbA, PsbB, PsbC, PsbD, PsbE, PsbF, PsbH, PsbI, PsbJ, PsbK, PsbL, PsbM, PsbT, PsbX, PsbY, PsbZ, Psb30/Ycf12, at least 3 peripheral proteins of the oxygen-evolving complex and a large number of cofactors. It forms dimeric complexes. The D1/D2 heterodimer binds P680, chlorophylls that are the primary electron donor of PSII, and subsequent electron acceptors. It shares a non-heme iron and each subunit binds pheophytin, quinone, additional chlorophylls, carotenoids and lipids. There is also a Cl(-1) ion associated with D1 and D2, which is required for oxygen evolution. The PSII complex binds additional chlorophylls, carotenoids and specific lipids. serves as cofactor.

Its subcellular location is the plastid membrane. The catalysed reaction is 2 a plastoquinone + 4 hnu + 2 H2O = 2 a plastoquinol + O2. Photosystem II (PSII) is a light-driven water:plastoquinone oxidoreductase that uses light energy to abstract electrons from H(2)O, generating O(2) and a proton gradient subsequently used for ATP formation. It consists of a core antenna complex that captures photons, and an electron transfer chain that converts photonic excitation into a charge separation. The D1/D2 (PsbA/PsbD) reaction center heterodimer binds P680, the primary electron donor of PSII as well as several subsequent electron acceptors. D2 is needed for assembly of a stable PSII complex. The protein is Photosystem II D2 protein of Cuscuta exaltata (Tall dodder).